A 161-amino-acid polypeptide reads, in one-letter code: Large ribosomal subunit protein uL11 (161 aa).

Belongs to the universal ribosomal protein uL11 family. Part of the ribosomal stalk of the 50S ribosomal subunit. Interacts with L10 and the large rRNA to form the base of the stalk. L10 forms an elongated spine to which L12 dimers bind in a sequential fashion forming a multimeric L10(L12)X complex.

Its function is as follows. Forms part of the ribosomal stalk which helps the ribosome interact with GTP-bound translation factors. This chain is Large ribosomal subunit protein uL11, found in Methanosarcina acetivorans (strain ATCC 35395 / DSM 2834 / JCM 12185 / C2A).